A 257-amino-acid polypeptide reads, in one-letter code: Putative hydro-lyase YcsI (257 aa).

Belongs to the D-glutamate cyclase family.

This chain is Putative hydro-lyase YcsI (ycsI), found in Bacillus subtilis (strain 168).